The sequence spans 199 residues: Thymidylate kinase (199 aa).

7-14 contributes to the ATP binding site; the sequence is GTEGVGKT.

Belongs to the thymidylate kinase family.

It carries out the reaction dTMP + ATP = dTDP + ADP. Phosphorylation of dTMP to form dTDP in both de novo and salvage pathways of dTTP synthesis. The chain is Thymidylate kinase from Acinetobacter baumannii (strain ATCC 17978 / DSM 105126 / CIP 53.77 / LMG 1025 / NCDC KC755 / 5377).